Here is a 220-residue protein sequence, read N- to C-terminus: Recombination protein RecR (220 aa).

The C4-type zinc finger occupies 57 to 72; the sequence is CPICFNITDAEKCDVC. Positions 80 to 173 constitute a Toprim domain; the sequence is RTICVVEEPG…AISRIAYGVP (94 aa). The tract at residues 190–220 is disordered; sequence LTGRQTVSKPQPPQRPGDEDGADGAAVPASR.

It belongs to the RecR family.

May play a role in DNA repair. It seems to be involved in an RecBC-independent recombinational process of DNA repair. It may act with RecF and RecO. In Deinococcus radiodurans (strain ATCC 13939 / DSM 20539 / JCM 16871 / CCUG 27074 / LMG 4051 / NBRC 15346 / NCIMB 9279 / VKM B-1422 / R1), this protein is Recombination protein RecR.